A 254-amino-acid chain; its full sequence is MASDLEQLCSYVNEKIENIKKILSLRKLGQDPTLKTTLSKIGDEIITVNELLNQFELEIQYQEQTNSSLKELCKSLEEEFKDVEHLKEHIPSHLPQVTVTQSSTHKPDLDPKESVKAEEPVLPKKPPKEQRVIKEMHFITTDEFSGVPAYMKSRLTYCQINDVIKEINKAVVSKYKIIHQPKASMSSVKRNLYQRFINEETKDTKGRHFIVEADIKEFTTLKVDKKFHVIMNILRHCQRLSEVRGGGLTRYVIT.

Residues 58–90 (EIQYQEQTNSSLKELCKSLEEEFKDVEHLKEHI) are a coiled coil. Residues 91-131 (PSHLPQVTVTQSSTHKPDLDPKESVKAEEPVLPKKPPKEQR) are flexiple loop that anchors MAPRE1. Positions 92–95 (SHLP) match the SXLP motif; mediates interaction with MAPRE1, targeting to microtubule plus ends, stabilization on kinetochores and is required for proper chromosome alignment to the metaphase plate motif. The tract at residues 97 to 127 (VTVTQSSTHKPDLDPKESVKAEEPVLPKKPP) is disordered. Residues 105 to 127 (HKPDLDPKESVKAEEPVLPKKPP) are compositionally biased toward basic and acidic residues. The segment at 131 to 254 (RVIKEMHFIT…GGGLTRYVIT (124 aa)) is binds microtubules and protein phosphatase PP1 subunit PPP1CA. A Phosphothreonine modification is found at threonine 156. Serine 241 is subject to Phosphoserine.

The protein belongs to the SKA1 family. In terms of assembly, component of the SKA complex, composed of SKA1, SKA2 and SKA3. The SKA complex is a homodimer organized around a central W-shaped coiled-coil structure, formed by the interacting domains of SKA1, SKA2, and SKA3, each end of the 'W' is extended further by the C-terminal microtubule-binding domains of SKA1 and SKA3; the complex forms extended structures on microtubules. Interacts (via SXLP motif) with MAPRE1 (via C-terminus); the interaction is direct and stabilizes the kinetochore-microtubule attachment of the SKA1 complex. Interacts (via C-terminus) with protein phosphatase PP1 subunit PPP1CA; the interaction is direct and required for recruitment of PPP1CA to the kinetochore. Interacts with the NDC80 complex; the interaction is required to establish kinetochore-microtubule end-on attachments.

It localises to the cytoplasm. Its subcellular location is the cytoskeleton. It is found in the spindle. The protein localises to the chromosome. The protein resides in the centromere. It localises to the kinetochore. Its subcellular location is the microtubule organizing center. It is found in the centrosome. Its function is as follows. Component of the SKA complex, a microtubule plus end-binding complex of the outer kinetochore that stabilizes spindle microtubule-kinetochore attachments, promotes alignment of chromosomes at the mitotic spindle equator (chromosome congression) and assists suppression of the spindle assembly checkpoint. Kinetochores, consisting of a centromere-associated inner segment and a microtubule-contacting outer segment, play a crucial role in chromosome segregation by mediating the physical connection between centromeric DNA and spindle microtubules. The outer kinetochore is made up of the ten-subunit KMN network complex, comprising the MIS12, NDC80 and KNL1 complexes, and auxiliary microtubule-associated components such as the SKA complex; together they connect the outer kinetochore with the inner kinetochore, bind microtubules, and mediate interactions with mitotic checkpoint proteins that delay anaphase until chromosomes are bioriented on the spindle. The SKA complex is loaded onto bioriented kinetochores and it facilitates chromosome congression by stabilizing microtubules together with MAPRE1, and end-on attachment of the NDC80 complex to depolymerizing spindle microtubules, thereby assisting the poleward-moving kinetochore in withstanding microtubule pulling forces. The complex associates with dynamic microtubule plus-ends and can track both depolymerizing and elongating microtubules. The complex recruits protein phosphatase 1 (PP1) to the kinetochore in prometaphase and metaphase, to oppose spindle assembly checkpoint signaling and promote the onset of anaphase. In the complex, it mediates interactions with microtubules. It also stimulates AURKB/Aurora B catalytic activity. During meiosis the SKA complex stabilizes the meiotic spindle and is required for its migration to the cortex. The protein is SKA complex subunit 1 (Ska1) of Rattus norvegicus (Rat).